Here is a 430-residue protein sequence, read N- to C-terminus: Glucose-6-phosphate isomerase (430 aa).

The Proton donor role is filled by glutamate 284. Residues histidine 305 and lysine 420 contribute to the active site.

This sequence belongs to the GPI family.

Its subcellular location is the cytoplasm. It catalyses the reaction alpha-D-glucose 6-phosphate = beta-D-fructose 6-phosphate. Its pathway is carbohydrate biosynthesis; gluconeogenesis. The protein operates within carbohydrate degradation; glycolysis; D-glyceraldehyde 3-phosphate and glycerone phosphate from D-glucose: step 2/4. Its function is as follows. Catalyzes the reversible isomerization of glucose-6-phosphate to fructose-6-phosphate. The protein is Glucose-6-phosphate isomerase of Mycoplasma pneumoniae (strain ATCC 29342 / M129 / Subtype 1) (Mycoplasmoides pneumoniae).